A 164-amino-acid chain; its full sequence is Lipoprotein signal peptidase (164 aa).

A run of 4 helical transmembrane segments spans residues 11–31, 41–61, 64–84, and 92–112; these read YWVL…AVLS, VIPS…FSFL, QGGW…AYLV, and FAAL…GNVI. Catalysis depends on residues Asp-122 and Asp-140. The helical transmembrane segment at 132 to 152 threads the bilayer; it reads FYPAFNIADSFICVGAVLAVL.

This sequence belongs to the peptidase A8 family.

Its subcellular location is the cell inner membrane. It carries out the reaction Release of signal peptides from bacterial membrane prolipoproteins. Hydrolyzes -Xaa-Yaa-Zaa-|-(S,diacylglyceryl)Cys-, in which Xaa is hydrophobic (preferably Leu), and Yaa (Ala or Ser) and Zaa (Gly or Ala) have small, neutral side chains.. It participates in protein modification; lipoprotein biosynthesis (signal peptide cleavage). In terms of biological role, this protein specifically catalyzes the removal of signal peptides from prolipoproteins. The sequence is that of Lipoprotein signal peptidase from Neisseria gonorrhoeae (strain ATCC 700825 / FA 1090).